Here is a 1270-residue protein sequence, read N- to C-terminus: DNA-directed RNA polymerase subunit beta (1270 aa).

This sequence belongs to the RNA polymerase beta chain family. The RNAP catalytic core consists of 2 alpha, 1 beta, 1 beta' and 1 omega subunit. When a sigma factor is associated with the core the holoenzyme is formed, which can initiate transcription.

It catalyses the reaction RNA(n) + a ribonucleoside 5'-triphosphate = RNA(n+1) + diphosphate. Functionally, DNA-dependent RNA polymerase catalyzes the transcription of DNA into RNA using the four ribonucleoside triphosphates as substrates. This is DNA-directed RNA polymerase subunit beta from Christiangramia forsetii (strain DSM 17595 / CGMCC 1.15422 / KT0803) (Gramella forsetii).